The following is a 232-amino-acid chain: Putative ABC transporter ATP-binding protein VNG_2317G (232 aa).

The 230-residue stretch at 2–231 (LSVRNLVHRY…GALPDAGVRP (230 aa)) folds into the ABC transporter domain. 34–41 (GANGSGKT) is an ATP binding site.

It belongs to the ABC transporter superfamily.

It localises to the cell membrane. In terms of biological role, probably part of an ABC transporter complex. Responsible for energy coupling to the transport system. The chain is Putative ABC transporter ATP-binding protein VNG_2317G from Halobacterium salinarum (strain ATCC 700922 / JCM 11081 / NRC-1) (Halobacterium halobium).